Here is a 236-residue protein sequence, read N- to C-terminus: Chorionic somatomammotropin hormone 1 (236 aa).

The signal sequence occupies residues 1–36 (MAPASSHRGHQWICDLVRGSCLLLLLVVSNLLLCQG). The N-linked (GlcNAc...) asparagine glycan is linked to N89. 2 disulfide bridges follow: C98–C214 and C231–C236.

It belongs to the somatotropin/prolactin family.

Its subcellular location is the secreted. This Bos taurus (Bovine) protein is Chorionic somatomammotropin hormone 1 (CSH1).